Reading from the N-terminus, the 500-residue chain is Lysine--tRNA ligase (500 aa).

Positions 410 and 417 each coordinate Mg(2+).

The protein belongs to the class-II aminoacyl-tRNA synthetase family. In terms of assembly, homodimer. Requires Mg(2+) as cofactor.

It localises to the cytoplasm. It catalyses the reaction tRNA(Lys) + L-lysine + ATP = L-lysyl-tRNA(Lys) + AMP + diphosphate. In Shewanella piezotolerans (strain WP3 / JCM 13877), this protein is Lysine--tRNA ligase.